The sequence spans 694 residues: Follicle-stimulating hormone receptor (694 aa).

A signal peptide spans 1 to 17 (MALLLVSLLAFLSLGSG). Intrachain disulfides connect cysteine 18/cysteine 25 and cysteine 23/cysteine 32. The 29-residue stretch at 18-46 (CHHRVCHCSNRVFLCQESKVTEIPSDLPR) folds into the LRRNT domain. The Extracellular portion of the chain corresponds to 18 to 365 (CHHRVCHCSN…EDIMGYDILR (348 aa)). 9 LRR repeats span residues 49-72 (LELRFVLTKLRVIPKGAFSGFGDL), 73-97 (EKIEISQNDVLEVIEANVFSNLPKL), 98-118 (HEIRIEKANNLLYIDHDAFQN), 119-143 (LPNLQYLLISNTGIKHLPAVHKIQS), 144-169 (LQKVLLDIQDNINIHTVERNSFMGLS), 170-192 (FESTILRLSKNGIQEIHNCAFNG), 193-216 (TQLDELNLSYNNNLEELPNDVFQG), 217-240 (ASGPVILDISGTRIHSLPNYGLEN), and 241-259 (LKKLRARSTYNLKKLPSLE). N-linked (GlcNAc...) asparagine glycans are attached at residues asparagine 191 and asparagine 199. Asparagine 268 carries an N-linked (GlcNAc...) asparagine glycan. 4 cysteine pairs are disulfide-bonded: cysteine 275-cysteine 345, cysteine 276-cysteine 292, cysteine 276-cysteine 355, and cysteine 292-cysteine 337. Asparagine 293 carries N-linked (GlcNAc...) asparagine glycosylation. A Sulfotyrosine modification is found at tyrosine 334. A helical membrane pass occupies residues 366-386 (VLIWFISILAITGNIIVLVIL). The Cytoplasmic portion of the chain corresponds to 387-397 (ITSQYKLTVPR). The helical transmembrane segment at 398–420 (FLMCNLAFADLCIGIYLLLIASV) threads the bilayer. Residues 421 to 442 (DIHTKSQYHNYAIDWQTGAGCD) are Extracellular-facing. A disulfide bond links cysteine 441 and cysteine 516. Residues 443 to 464 (AAGFFTVFASELSVYTLTAITL) form a helical membrane-spanning segment. The Cytoplasmic portion of the chain corresponds to 465 to 484 (ERWHTITHAMQLECKVQLRH). The helical transmembrane segment at 485-507 (AASVMLVGWIFAFAVALLPIFGI) threads the bilayer. At 508–527 (STYMKVSICLPMDIDSPLSQ) the chain is on the extracellular side. Residues 528–549 (LYVMSLLVLNVLAFVVICGCYI) traverse the membrane as a helical segment. Residues 550–572 (HIYLTVRNPNIVSSSSDTKIAKR) are Cytoplasmic-facing. Residues 573–596 (MAILIFTDFLCMAPISFFAISASL) form a helical membrane-spanning segment. Residues 597–607 (KVPLITVSKSK) lie on the Extracellular side of the membrane. A helical membrane pass occupies residues 608–629 (ILLVLFYPINSCANPFLYAIFT). Residues 630-694 (KNFRRDFFIL…LVPLSHLAQN (65 aa)) lie on the Cytoplasmic side of the membrane.

Belongs to the G-protein coupled receptor 1 family. FSH/LSH/TSH subfamily. In terms of assembly, homotrimer. Functions as a homotrimer binding the FSH hormone heterodimer composed of CGA and FSHB. Interacts with ARRB2. Interacts with APPL2; interaction is independent of follicle stimulating hormone stimulation. N-glycosylated; indirectly required for FSH-binding, possibly via a conformational change that allows high affinity binding of hormone. In terms of processing, sulfated.

The protein localises to the cell membrane. G protein-coupled receptor for follitropin, the follicle-stimulating hormone. Through cAMP production activates the downstream PI3K-AKT and ERK1/ERK2 signaling pathways. This is Follicle-stimulating hormone receptor (FSHR) from Equus caballus (Horse).